The following is a 392-amino-acid chain: Galactokinase (392 aa).

Arg37, Glu43, His44, and Asp46 together coordinate alpha-D-galactose. The ATP site is built by Gly136, Gly138, Ser140, and Ser141. Asp186 provides a ligand contact to alpha-D-galactose. Catalysis depends on Asp186, which acts as the Proton acceptor. Ser230 is subject to Phosphoserine. Tyr236 is a binding site for alpha-D-galactose.

The protein belongs to the GHMP kinase family. GalK subfamily. As to quaternary structure, homodimer.

The enzyme catalyses alpha-D-galactose + ATP = alpha-D-galactose 1-phosphate + ADP + H(+). The protein operates within carbohydrate metabolism; galactose metabolism. In terms of biological role, catalyzes the transfer of a phosphate from ATP to alpha-D-galactose and participates in the first committed step in the catabolism of galactose. The sequence is that of Galactokinase (GALK1) from Bos taurus (Bovine).